Here is a 445-residue protein sequence, read N- to C-terminus: Glucose-6-phosphate isomerase (445 aa).

Glutamate 287 functions as the Proton donor in the catalytic mechanism. Active-site residues include histidine 308 and lysine 422.

The protein belongs to the GPI family.

The protein localises to the cytoplasm. The catalysed reaction is alpha-D-glucose 6-phosphate = beta-D-fructose 6-phosphate. Its pathway is carbohydrate biosynthesis; gluconeogenesis. It functions in the pathway carbohydrate degradation; glycolysis; D-glyceraldehyde 3-phosphate and glycerone phosphate from D-glucose: step 2/4. Catalyzes the reversible isomerization of glucose-6-phosphate to fructose-6-phosphate. This chain is Glucose-6-phosphate isomerase, found in Bacteroides thetaiotaomicron (strain ATCC 29148 / DSM 2079 / JCM 5827 / CCUG 10774 / NCTC 10582 / VPI-5482 / E50).